The following is a 274-amino-acid chain: Large ribosomal subunit protein uL2cz/uL2cy (274 aa).

The segment at 224-253 is disordered; it reads NPIDHPHGGGEGRAPIGRKKPTTPWGYPAL.

It belongs to the universal ribosomal protein uL2 family. As to quaternary structure, part of the 50S ribosomal subunit.

It localises to the plastid. This Epifagus virginiana (Beechdrops) protein is Large ribosomal subunit protein uL2cz/uL2cy (rpl2-A).